We begin with the raw amino-acid sequence, 80 residues long: Translation initiation factor IF-1 (80 aa).

The 75-residue stretch at 6–80 (RKQEHEKERG…LTRGRIVYRL (75 aa)) folds into the S1-like domain.

Belongs to the IF-1 family. As to quaternary structure, component of the 30S ribosomal translation pre-initiation complex which assembles on the 30S ribosome in the order IF-2 and IF-3, IF-1 and N-formylmethionyl-tRNA(fMet); mRNA recruitment can occur at any time during PIC assembly.

The protein localises to the cytoplasm. Its function is as follows. One of the essential components for the initiation of protein synthesis. Stabilizes the binding of IF-2 and IF-3 on the 30S subunit to which N-formylmethionyl-tRNA(fMet) subsequently binds. Helps modulate mRNA selection, yielding the 30S pre-initiation complex (PIC). Upon addition of the 50S ribosomal subunit IF-1, IF-2 and IF-3 are released leaving the mature 70S translation initiation complex. The chain is Translation initiation factor IF-1 from Aquifex aeolicus (strain VF5).